The chain runs to 149 residues: Deoxyuridine 5'-triphosphate nucleotidohydrolase (149 aa).

Residues 68-70 (RSG), Asn81, 85-87 (LID), and Met95 each bind substrate.

Belongs to the dUTPase family. Requires Mg(2+) as cofactor.

The enzyme catalyses dUTP + H2O = dUMP + diphosphate + H(+). It functions in the pathway pyrimidine metabolism; dUMP biosynthesis; dUMP from dCTP (dUTP route): step 2/2. Its function is as follows. This enzyme is involved in nucleotide metabolism: it produces dUMP, the immediate precursor of thymidine nucleotides and it decreases the intracellular concentration of dUTP so that uracil cannot be incorporated into DNA. In Bordetella avium (strain 197N), this protein is Deoxyuridine 5'-triphosphate nucleotidohydrolase.